The following is a 729-amino-acid chain: Fatty acid oxidation complex subunit alpha (729 aa).

The tract at residues 1-189 (MLYKGDTLYL…KIGLVDGVVK (189 aa)) is enoyl-CoA hydratase/isomerase. Aspartate 296 is a binding site for substrate. Residues 311-729 (ETPKQAAVLG…ARPVGDLKTA (419 aa)) are 3-hydroxyacyl-CoA dehydrogenase. Residues methionine 324, aspartate 343, 400-402 (VVE), lysine 407, and serine 429 each bind NAD(+). Histidine 450 acts as the For 3-hydroxyacyl-CoA dehydrogenase activity in catalysis. Residue asparagine 453 coordinates NAD(+). Residues asparagine 500 and tyrosine 660 each coordinate substrate. A disordered region spans residues 708-729 (RHNEPYYPPVEPARPVGDLKTA).

This sequence in the N-terminal section; belongs to the enoyl-CoA hydratase/isomerase family. The protein in the C-terminal section; belongs to the 3-hydroxyacyl-CoA dehydrogenase family. Heterotetramer of two alpha chains (FadB) and two beta chains (FadA).

It carries out the reaction a (3S)-3-hydroxyacyl-CoA + NAD(+) = a 3-oxoacyl-CoA + NADH + H(+). It catalyses the reaction a (3S)-3-hydroxyacyl-CoA = a (2E)-enoyl-CoA + H2O. The catalysed reaction is a 4-saturated-(3S)-3-hydroxyacyl-CoA = a (3E)-enoyl-CoA + H2O. The enzyme catalyses (3S)-3-hydroxybutanoyl-CoA = (3R)-3-hydroxybutanoyl-CoA. It carries out the reaction a (3Z)-enoyl-CoA = a 4-saturated (2E)-enoyl-CoA. It catalyses the reaction a (3E)-enoyl-CoA = a 4-saturated (2E)-enoyl-CoA. Its pathway is lipid metabolism; fatty acid beta-oxidation. Its function is as follows. Involved in the aerobic and anaerobic degradation of long-chain fatty acids via beta-oxidation cycle. Catalyzes the formation of 3-oxoacyl-CoA from enoyl-CoA via L-3-hydroxyacyl-CoA. It can also use D-3-hydroxyacyl-CoA and cis-3-enoyl-CoA as substrate. This is Fatty acid oxidation complex subunit alpha from Escherichia coli O7:K1 (strain IAI39 / ExPEC).